Here is a 178-residue protein sequence, read N- to C-terminus: Glutamyl-tRNA(Gln) amidotransferase subunit C, mitochondrial (178 aa).

Residues M1–V31 constitute a mitochondrion transit peptide. The disordered stretch occupies residues S26–Q67. Over residues S37 to K46 the composition is skewed to basic and acidic residues.

Belongs to the GatC family. In terms of assembly, subunit of the heterotrimeric GatCAB amidotransferase (AdT) complex, composed of A, B and C subunits.

It is found in the mitochondrion. It carries out the reaction L-glutamyl-tRNA(Gln) + L-glutamine + ATP + H2O = L-glutaminyl-tRNA(Gln) + L-glutamate + ADP + phosphate + H(+). Allows the formation of correctly charged Gln-tRNA(Gln) through the transamidation of misacylated Glu-tRNA(Gln) in the mitochondria. The reaction takes place in the presence of glutamine and ATP through an activated gamma-phospho-Glu-tRNA(Gln). The chain is Glutamyl-tRNA(Gln) amidotransferase subunit C, mitochondrial from Aedes aegypti (Yellowfever mosquito).